Reading from the N-terminus, the 359-residue chain is Nicotinate-nucleotide--dimethylbenzimidazole phosphoribosyltransferase (359 aa).

Glu318 serves as the catalytic Proton acceptor.

Belongs to the CobT family. Homodimer.

The enzyme catalyses 5,6-dimethylbenzimidazole + nicotinate beta-D-ribonucleotide = alpha-ribazole 5'-phosphate + nicotinate + H(+). It participates in nucleoside biosynthesis; alpha-ribazole biosynthesis; alpha-ribazole from 5,6-dimethylbenzimidazole: step 1/2. In terms of biological role, catalyzes the synthesis of alpha-ribazole-5'-phosphate from nicotinate mononucleotide (NAMN) and 5,6-dimethylbenzimidazole (DMB). The sequence is that of Nicotinate-nucleotide--dimethylbenzimidazole phosphoribosyltransferase from Escherichia coli (strain UTI89 / UPEC).